The sequence spans 1335 residues: Restriction of telomere capping protein 1 (1335 aa).

Residues 1 to 39 (MSLSPHVENASIPKGSTPIPKNRNVSSIGKGEFLGSSSS) are disordered. WD repeat units follow at residues 207–248 (NKFS…SIDN), 256–296 (EHTR…SKSS), 305–342 (TASDSIRDVKWMPGYNFASKNDQGSSTYGNLKSGYKFA), 367–406 (AHTGPGLCLNWHPNQEYIATGGRDGKCCLWFVGDNANAAE), 439–486 (NTGY…IPKH), and 489–527 (LSETPSLGLVWWDENLIFNIDKGTRINGWDINKEPTVLE). Disordered regions lie at residues 559 to 593 (PELQPTSSTTCKKHPGTIKNPKNGNPENQGIIGGI), 600 to 619 (TGLTSFTPERPPTLKAGPTF), 630 to 651 (ASSFNSSSASLTSLTPQTENRE), 736 to 758 (KNATETHGDNTTTTNNNDDDDDD), and 783 to 824 (NEKV…DRSR). Residues 630-644 (ASSFNSSSASLTSLT) are compositionally biased toward low complexity. Positions 808 to 817 (SSISSISASR) are enriched in low complexity. A WD 7 repeat occupies 844 to 884 (LISIATHNASVYLSIDDLTNFKIWILIRDSLLWDLKWMTSS). 2 disordered regions span residues 935–956 (AFRANSDEPSDAEKKPVSKLKE) and 1007–1037 (DEHEHQEEEQPHDSPTKSAQFHASPIAKSIP). 2 stretches are compositionally biased toward basic and acidic residues: residues 945–956 (DAEKKPVSKLKE) and 1009–1021 (HEHQEEEQPHDSP). Ser1030, Ser1074, Ser1081, Ser1083, Ser1117, and Ser1127 each carry phosphoserine. WD repeat units follow at residues 1130 to 1170 (REQL…TETG) and 1217 to 1256 (VLKYCPFEDIMGSEGDQSSIRLFCERCGELITNESSKEKL). The segment at 1294–1335 (LKKLTMVILPCGHEGHFQCIQEWFLDENEQECPGGCPGVAFI) adopts an RING-type; degenerate zinc-finger fold.

It belongs to the WD repeat RTC1 family.

The protein resides in the vacuole. In terms of biological role, may be involved in a process influencing telomere capping. The polypeptide is Restriction of telomere capping protein 1 (RTC1) (Saccharomyces cerevisiae (strain YJM789) (Baker's yeast)).